Consider the following 93-residue polypeptide: Large ribosomal subunit protein eL31 (93 aa).

It belongs to the eukaryotic ribosomal protein eL31 family.

This chain is Large ribosomal subunit protein eL31, found in Methanosarcina mazei (strain ATCC BAA-159 / DSM 3647 / Goe1 / Go1 / JCM 11833 / OCM 88) (Methanosarcina frisia).